Consider the following 305-residue polypeptide: Transcriptional activator protein PfeR (305 aa).

Positions 79–192 (RLLLVEDDPR…ELDARTDALL (114 aa)) constitute a Response regulatory domain. Asp-128 bears the 4-aspartylphosphate mark. The segment at residues 200-301 (LPLAQRRDTR…VRGQGYLLVE (102 aa)) is a DNA-binding region (ompR/PhoB-type).

In terms of processing, phosphorylated by PfeS.

Its subcellular location is the cytoplasm. Its function is as follows. Member of the two-component regulatory system PfeR/PfeS. Activates expression of the ferric enterobactin receptor. The protein is Transcriptional activator protein PfeR (pfeR) of Pseudomonas aeruginosa (strain ATCC 15692 / DSM 22644 / CIP 104116 / JCM 14847 / LMG 12228 / 1C / PRS 101 / PAO1).